We begin with the raw amino-acid sequence, 257 residues long: Cobalt transport protein CbiM (257 aa).

The signal sequence occupies residues 1 to 33; it reads MVKPTQAKRYASLGAIALLTTSLVVASPNPALA. The next 6 helical transmembrane spans lie at 39-59, 74-94, 117-137, 138-158, 171-191, and 214-234; these read GFLP…FLAW, SVLL…LKIP, LMAV…AHGG, LTTL…LAWL, AIAL…LTSL, and LFAV…VLVW.

Belongs to the CbiM family. Forms an energy-coupling factor (ECF) transporter complex composed of an ATP-binding protein (A component, CbiO), a transmembrane protein (T component, CbiQ) and 2 possible substrate-capture proteins (S components, CbiM and CbiN) of unknown stoichimetry.

The protein resides in the cell inner membrane. It participates in cofactor biosynthesis; adenosylcobalamin biosynthesis. Its function is as follows. Part of the energy-coupling factor (ECF) transporter complex CbiMNOQ involved in cobalt import. The polypeptide is Cobalt transport protein CbiM (Thermosynechococcus vestitus (strain NIES-2133 / IAM M-273 / BP-1)).